The chain runs to 387 residues: 8-amino-7-oxononanoate synthase (387 aa).

Arg20 lines the substrate pocket. 107 to 108 is a pyridoxal 5'-phosphate binding site; the sequence is GY. His132 contributes to the substrate binding site. Pyridoxal 5'-phosphate-binding residues include Ser181, His209, and Thr238. At Lys241 the chain carries N6-(pyridoxal phosphate)lysine. Thr355 is a binding site for substrate.

This sequence belongs to the class-II pyridoxal-phosphate-dependent aminotransferase family. BioF subfamily. As to quaternary structure, homodimer. It depends on pyridoxal 5'-phosphate as a cofactor.

The catalysed reaction is 6-carboxyhexanoyl-[ACP] + L-alanine + H(+) = (8S)-8-amino-7-oxononanoate + holo-[ACP] + CO2. It participates in cofactor biosynthesis; biotin biosynthesis. Functionally, catalyzes the decarboxylative condensation of pimeloyl-[acyl-carrier protein] and L-alanine to produce 8-amino-7-oxononanoate (AON), [acyl-carrier protein], and carbon dioxide. This is 8-amino-7-oxononanoate synthase from Dechloromonas aromatica (strain RCB).